A 422-amino-acid chain; its full sequence is GTPase Obg (422 aa).

Residues 1-156 enclose the Obg domain; it reads MKFIDEVNVL…FALRLVLKVL (156 aa). The OBG-type G domain occupies 157-324; the sequence is ADVGLVGKPS…LKAAIFKMLE (168 aa). Residues 163–170, 188–192, 209–212, 278–281, and 305–307 each bind GTP; these read GKPSAGKS, FTTLV, DLPG, NKSD, and SAL. Mg(2+) is bound by residues Ser170 and Thr190. The 79-residue stretch at 342–420 folds into the OCT domain; the sequence is NITLDRDALK…IGNFEFDWSD (79 aa).

This sequence belongs to the TRAFAC class OBG-HflX-like GTPase superfamily. OBG GTPase family. As to quaternary structure, monomer. It depends on Mg(2+) as a cofactor.

The protein localises to the cytoplasm. In terms of biological role, an essential GTPase which binds GTP, GDP and possibly (p)ppGpp with moderate affinity, with high nucleotide exchange rates and a fairly low GTP hydrolysis rate. Plays a role in control of the cell cycle, stress response, ribosome biogenesis and in those bacteria that undergo differentiation, in morphogenesis control. The chain is GTPase Obg from Metamycoplasma arthritidis (strain 158L3-1) (Mycoplasma arthritidis).